Consider the following 123-residue polypeptide: U11/U12 small nuclear ribonucleoprotein 25 kDa protein (123 aa).

The Ubiquitin-like domain maps to 32-123; sequence MTVRVCKMDG…VSFIKKLRQK (92 aa).

Component of the U11/U12 snRNPs that are part of the U12-type spliceosome.

It localises to the nucleus. This chain is U11/U12 small nuclear ribonucleoprotein 25 kDa protein (SNRNP25), found in Bos taurus (Bovine).